The following is a 166-amino-acid chain: Large ribosomal subunit protein uL10 (166 aa).

The protein belongs to the universal ribosomal protein uL10 family. As to quaternary structure, part of the ribosomal stalk of the 50S ribosomal subunit. The N-terminus interacts with L11 and the large rRNA to form the base of the stalk. The C-terminus forms an elongated spine to which L12 dimers bind in a sequential fashion forming a multimeric L10(L12)X complex.

Forms part of the ribosomal stalk, playing a central role in the interaction of the ribosome with GTP-bound translation factors. The chain is Large ribosomal subunit protein uL10 from Streptococcus agalactiae serotype V (strain ATCC BAA-611 / 2603 V/R).